The sequence spans 441 residues: ATP-dependent protease ATPase subunit HslU (441 aa).

ATP contacts are provided by residues isoleucine 18, 60–65 (GVGKTE), aspartate 254, glutamate 319, and arginine 391.

It belongs to the ClpX chaperone family. HslU subfamily. As to quaternary structure, a double ring-shaped homohexamer of HslV is capped on each side by a ring-shaped HslU homohexamer. The assembly of the HslU/HslV complex is dependent on binding of ATP.

The protein resides in the cytoplasm. Its function is as follows. ATPase subunit of a proteasome-like degradation complex; this subunit has chaperone activity. The binding of ATP and its subsequent hydrolysis by HslU are essential for unfolding of protein substrates subsequently hydrolyzed by HslV. HslU recognizes the N-terminal part of its protein substrates and unfolds these before they are guided to HslV for hydrolysis. The protein is ATP-dependent protease ATPase subunit HslU of Shewanella loihica (strain ATCC BAA-1088 / PV-4).